The sequence spans 317 residues: GPI-specific phospholipase A2-like PGAP3 (317 aa).

The signal sequence occupies residues M1–G18. Topologically, residues D19 to R93 are lumenal. N-linked (GlcNAc...) asparagine glycosylation occurs at N35. Residues F94 to L114 traverse the membrane as a helical segment. Residues L115 to R132 lie on the Cytoplasmic side of the membrane. Residues T133–T153 form a helical membrane-spanning segment. The Lumenal segment spans residues R154–D163. A helical membrane pass occupies residues Y164–M180. Residues R181–S189 lie on the Cytoplasmic side of the membrane. Residues I190–T210 traverse the membrane as a helical segment. The Lumenal portion of the chain corresponds to L211–N219. A helical transmembrane segment spans residues M220–W240. Topologically, residues R241–C251 are cytoplasmic. A helical membrane pass occupies residues V252 to V272. M273 is a topological domain (lumenal). Residues W274–F293 form a helical membrane-spanning segment. Residues Y294 to D317 are Cytoplasmic-facing.

The protein belongs to the PGAP3 family.

Its subcellular location is the golgi apparatus membrane. Its function is as follows. Involved in the fatty acid remodeling steps of GPI-anchor maturation where the unsaturated acyl chain at sn-2 of inositol phosphate is replaced by a saturated stearoyl chain. May catalyze the first step of the fatty acid remodeling, by removing the unsaturated acyl chain at sn-2 of inositol phosphate, generating a lyso-GPI intermediate. The fatty acid remodeling steps is critical for the integration of GPI-APs into lipid rafts. The polypeptide is GPI-specific phospholipase A2-like PGAP3 (Xenopus laevis (African clawed frog)).